The primary structure comprises 356 residues: Protein-arginine kinase (356 aa).

A Phosphagen kinase C-terminal domain is found at 24–254 (IVLSTRIRLA…HQLIQQEKAA (231 aa)). Residues 27 to 31 (STRIR), His92, Arg125, 176 to 180 (RASVM), and 207 to 212 (RGIYGE) each bind ATP. The RDXXRA motif of the pArg binding pocket involved in allosteric regulation signature appears at 337-342 (RDYRRA).

The protein belongs to the ATP:guanido phosphotransferase family.

The catalysed reaction is L-arginyl-[protein] + ATP = N(omega)-phospho-L-arginyl-[protein] + ADP + H(+). Appears to be allosterically activated by the binding of pArg-containing polypeptides to the pArg-binding pocket localized in the C-terminal domain of McsB. In terms of biological role, catalyzes the specific phosphorylation of arginine residues in a large number of proteins. Is part of the bacterial stress response system. Protein arginine phosphorylation has a physiologically important role and is involved in the regulation of many critical cellular processes, such as protein homeostasis, motility, competence, and stringent and stress responses, by regulating gene expression and protein activity. This Bacillus cytotoxicus (strain DSM 22905 / CIP 110041 / 391-98 / NVH 391-98) protein is Protein-arginine kinase.